The following is a 437-amino-acid chain: MSLFLDTARIEVKAGKGGDGAVAFRREKYVPDGGPAGGDGGKGGSVIFKVDEGMSTLMDFRYNRIFRGKPGEKGMNKGMHGRGAEDLIVHVPQGTTVKDNETGDVLVDLIEKDQEFVVAKGGRGGRGNIRFATPRNPAPEVAENGEPGEDKILLLELRVLADVGLVGFPSVGKSTLLSVVSNARPKIGAYHFTTITPNIGMVQVGYGDSFVMADMPGLIEGAHSGAGLGIQFLRHIERTRVLLHILDMSELEGRDPYEDYKTINDELESYNLRLMERPQLIVANKMDMPEAAERLAEFKEKLAADLEADQEMPEIFEVSGLIKTGLQGLLARTSELLAQTPEFLLYDEDALGDEVAYYGFEDEEKPFKVSRDDDGGWRLSGEKIEKLFIMTNFDHDESVMKFARQMRAFGVDETLRSMGAKDGDYVRIQKFEFEFVD.

The 159-residue stretch at Ser2 to Leu160 folds into the Obg domain. The region spanning Ala161–Ala338 is the OBG-type G domain. GTP-binding positions include Gly167–Ser174, Phe192–Thr196, Asp214–Gly217, Asn284–Asp287, and Ser319–Leu321. Mg(2+)-binding residues include Ser174 and Thr194. The region spanning Gly359–Asp437 is the OCT domain.

This sequence belongs to the TRAFAC class OBG-HflX-like GTPase superfamily. OBG GTPase family. Monomer. It depends on Mg(2+) as a cofactor.

The protein resides in the cytoplasm. Functionally, an essential GTPase which binds GTP, GDP and possibly (p)ppGpp with moderate affinity, with high nucleotide exchange rates and a fairly low GTP hydrolysis rate. Plays a role in control of the cell cycle, stress response, ribosome biogenesis and in those bacteria that undergo differentiation, in morphogenesis control. The sequence is that of GTPase Obg from Lactococcus lactis subsp. cremoris (strain SK11).